Consider the following 211-residue polypeptide: Large ribosomal subunit protein uL4 (211 aa).

Residues 44-90 form a disordered region; the sequence is ERQGTHSTLTKGEVRGGGKKPWRQKHTGKARTGSTRNPHWTGGGVVF. Basic residues predominate over residues 60 to 72; sequence GGKKPWRQKHTGK.

It belongs to the universal ribosomal protein uL4 family. Part of the 50S ribosomal subunit.

Its function is as follows. One of the primary rRNA binding proteins, this protein initially binds near the 5'-end of the 23S rRNA. It is important during the early stages of 50S assembly. It makes multiple contacts with different domains of the 23S rRNA in the assembled 50S subunit and ribosome. Functionally, forms part of the polypeptide exit tunnel. This chain is Large ribosomal subunit protein uL4, found in Ureaplasma urealyticum serovar 10 (strain ATCC 33699 / Western).